The primary structure comprises 80 residues: Exodeoxyribonuclease 7 small subunit (80 aa).

It belongs to the XseB family. In terms of assembly, heterooligomer composed of large and small subunits.

The protein localises to the cytoplasm. It catalyses the reaction Exonucleolytic cleavage in either 5'- to 3'- or 3'- to 5'-direction to yield nucleoside 5'-phosphates.. Bidirectionally degrades single-stranded DNA into large acid-insoluble oligonucleotides, which are then degraded further into small acid-soluble oligonucleotides. This Pseudomonas entomophila (strain L48) protein is Exodeoxyribonuclease 7 small subunit.